The following is a 365-amino-acid chain: Saoe class I histocompatibility antigen, C alpha chain (365 aa).

An N-terminal signal peptide occupies residues 1–24 (MTIMAPRTLLLLLSGALSVTETWA). The segment at 25–114 (GSHSMRYFST…LLGYYNQSEA (90 aa)) is alpha-1. Residues 25–308 (GSHSMRYFST…EPPSQPTIPI (284 aa)) are Extracellular-facing. N-linked (GlcNAc...) asparagine glycosylation occurs at Asn-110. Positions 115 to 206 (GFHTIQWMYG…ENGKEMLQRA (92 aa)) are alpha-2. Cystine bridges form between Cys-125–Cys-188 and Cys-227–Cys-283. The interval 207 to 298 (EPPKTHVTHH…GLPEPFTLRW (92 aa)) is alpha-3. Positions 209–297 (PKTHVTHHPV…EGLPEPFTLR (89 aa)) constitute an Ig-like C1-type domain. Residues 299–308 (EPPSQPTIPI) are connecting peptide. The helical transmembrane segment at 309–332 (MGIVAILAILGAVVTGAVVAAVMW) threads the bilayer. The Cytoplasmic portion of the chain corresponds to 333–365 (RKKSSDKKGGSYSQAARSDSAQGSDVSLTACKV). Positions 337-365 (SDKKGGSYSQAARSDSAQGSDVSLTACKV) are disordered. Positions 346-359 (QAARSDSAQGSDVS) are enriched in polar residues. Ser-356 and Ser-359 each carry phosphoserine.

Belongs to the MHC class I family. As to quaternary structure, heterodimer of an alpha chain and a beta chain (beta-2-microglobulin).

The protein resides in the membrane. Functionally, involved in the presentation of foreign antigens to the immune system. The chain is Saoe class I histocompatibility antigen, C alpha chain from Saguinus oedipus (Cotton-top tamarin).